We begin with the raw amino-acid sequence, 269 residues long: MEMO1 family protein TV1383 (269 aa).

Belongs to the MEMO1 family.

The chain is MEMO1 family protein TV1383 from Thermoplasma volcanium (strain ATCC 51530 / DSM 4299 / JCM 9571 / NBRC 15438 / GSS1).